The chain runs to 338 residues: Cytochrome f (338 aa).

Residues 1–45 (MNFKVCSFPSRRQSIAAFVRVLMVILLTLGALVSSDVLLPQPAAA) form the signal peptide. Residues Tyr46, Cys66, Cys69, and His70 each contribute to the heme site. Residues 300 to 316 (IAFLAAITLTQILLVLK) form a helical membrane-spanning segment.

It belongs to the cytochrome f family. In terms of assembly, the 4 large subunits of the cytochrome b6-f complex are cytochrome b6, subunit IV (17 kDa polypeptide, PetD), cytochrome f and the Rieske protein, while the 4 small subunits are PetG, PetL, PetM and PetN. The complex functions as a dimer. The cofactor is heme.

The protein resides in the cellular thylakoid membrane. In terms of biological role, component of the cytochrome b6-f complex, which mediates electron transfer between photosystem II (PSII) and photosystem I (PSI), cyclic electron flow around PSI, and state transitions. The polypeptide is Cytochrome f (petA) (Leptolyngbya laminosa (Phormidium laminosum)).